A 121-amino-acid chain; its full sequence is Prefoldin subunit beta (121 aa).

It belongs to the prefoldin subunit beta family. Heterohexamer of two alpha and four beta subunits.

It localises to the cytoplasm. Molecular chaperone capable of stabilizing a range of proteins. Seems to fulfill an ATP-independent, HSP70-like function in archaeal de novo protein folding. In Methanosphaerula palustris (strain ATCC BAA-1556 / DSM 19958 / E1-9c), this protein is Prefoldin subunit beta.